We begin with the raw amino-acid sequence, 457 residues long: MYSFNTLRLYLWETIVFFSLAASKEAEAARSAPKPMSPSDFLDKLMGRTSGYDARIRPNFKGPPVNVSCNIFINSFGSIAETTMDYRVNIFLRQQWNDPRLAYNEYPDDSLDLDPSMLDSIWKPDLFFANEKGAHFHEITTDNKLLRISRNGNVLYSIRITLTLACPMDLKNFPMDVQTCIMQLESFGYTMNDLIFEWQEQGAVQVADGLTLPQFILKEEKDLRYCTKHYNTGKFTCIEARFHLERQMGYYLIQMYIPSLLIVILSWISFWINMDAAPARVGLGITTVLTMTTQSSGSRASLPKVSYVKAIDIWMAVCLLFVFSALLEYAAVNFVSRQHKELLRFRRKRRHHKSPMLNLFQEDEAGEGRFNFSAYGMGPACLQAKDGISVKGANNSNTTNPPPAPSKSPEEMRKLFIQRAKKIDKISRIGFPMAFLIFNMFYWIIYKIVRREDVHNQ.

The first 28 residues, 1 to 28 (MYSFNTLRLYLWETIVFFSLAASKEAEA), serve as a signal peptide directing secretion. Residues 29–250 (ARSAPKPMSP…RFHLERQMGY (222 aa)) lie on the Extracellular side of the membrane. N66 carries N-linked (GlcNAc...) asparagine glycosylation. Positions 93 and 157 each coordinate glycine. An intrachain disulfide couples C166 to C180. Zn(2+) contacts are provided by E220 and D222. An intrachain disulfide couples C226 to C237. Strychnine is bound at residue 230–235 (YNTGKF). Residue T232 participates in glycine binding. Residue H243 participates in Zn(2+) binding. Residues 251–272 (YLIQMYIPSLLIVILSWISFWI) traverse the membrane as a helical segment. Topologically, residues 273–277 (NMDAA) are cytoplasmic. Residues 278–298 (PARVGLGITTVLTMTTQSSGS) form a helical membrane-spanning segment. The Extracellular segment spans residues 299 to 309 (RASLPKVSYVK). A helical transmembrane segment spans residues 310 to 330 (AIDIWMAVCLLFVFSALLEYA). Residues 331–425 (AVNFVSRQHK…FIQRAKKIDK (95 aa)) are Cytoplasmic-facing. Positions 391–410 (KGANNSNTTNPPPAPSKSPE) are disordered. The helical transmembrane segment at 426–446 (ISRIGFPMAFLIFNMFYWIIY) threads the bilayer. At 447 to 457 (KIVRREDVHNQ) the chain is on the extracellular side.

This sequence belongs to the ligand-gated ion channel (TC 1.A.9) family. Glycine receptor (TC 1.A.9.3) subfamily. GLRA1 sub-subfamily. In terms of assembly, interacts with GLRB to form heteropentameric channels; this is probably the predominant form in vivo. Heteropentamer composed of four GLRA1 subunits and one GLRB subunit. Heteropentamer composed of two GLRA1 and three GLRB. Heteropentamer composed of three GLRA1 and two GLRB. Homopentamer (in vitro). Both homopentamers and heteropentamers form functional ion channels, but their characteristics are subtly different.

The protein localises to the postsynaptic cell membrane. The protein resides in the synapse. Its subcellular location is the perikaryon. It localises to the cell projection. It is found in the dendrite. The protein localises to the cell membrane. It carries out the reaction chloride(in) = chloride(out). Its activity is regulated as follows. Channel opening is triggered by extracellular glycine. Channel characteristics depend on the subunit composition; heteropentameric channels are activated by lower glycine levels and display faster desensitization. Channel opening is also triggered by taurine and beta-alanine. Channel activity is potentiated by nanomolar concentrations of Zn(2+); half-maximal activation is observed with 37 nM Zn(2+). Inhibited by higher Zn(2+) levels; haf-maximal inhibition occurs at 20 uM Zn(2+). Inhibited by strychnine. Strychnine binding locks the channel in a closed conformation and prevents channel opening in response to extracellular glycine. Inhibited by lindane. Inhibited by picrotoxin. Functionally, subunit of heteromeric glycine-gated chloride channels. Plays an important role in the down-regulation of neuronal excitability. Contributes to the generation of inhibitory postsynaptic currents. Channel activity is potentiated by ethanol. Potentiation of channel activity by intoxicating levels of ethanol contribute to the sedative effects of ethanol. The chain is Glycine receptor subunit alpha-1 (GLRA1) from Homo sapiens (Human).